The sequence spans 321 residues: MLTQQPSQRTDIQAADSTGSFNKRRRNSVFVTVTLLIVSSLIFTLGMAATTRTENVTVGGYYPGVILGFGSILGIIGSNLIENKRQMLVASIVFISFGVIAAFCCAIVDGVFAARHLDLRPLYAGKCRYHSTTHNDHTTEVTCQQPMRNPCVLKIRSNTCYCCDLYNCGRIGNSGLYYEYTDVKSCQDVVHLYHLLWSVTILNIVGLFLGIITAAVLGGFKDMNPALPAISCIAETPRPTVQYNTRPAVPSYNTYYHSTPHLPPYTAYDLQHSSVFPASTPSGLSDDPNGQASSFMWPSNAPPRYSPPYFPPDEKPPPYTP.

Transmembrane regions (helical) follow at residues valine 29–alanine 49, valine 56–isoleucine 76, leucine 88–valine 108, and threonine 200–phenylalanine 220. Residues serine 279–tryptophan 297 are compositionally biased toward polar residues. The interval serine 279–asparagine 300 is disordered.

The protein belongs to the TMEM255 family.

The protein resides in the membrane. This Xenopus laevis (African clawed frog) protein is Transmembrane protein 255A (tmem255a).